Consider the following 152-residue polypeptide: Dehydratase aurZ (152 aa).

The EthD domain occupies 34 to 129 (PSLSEKEYRH…APDHVNFADT (96 aa)).

Belongs to the tpcK family.

The catalysed reaction is naphtopyrone YWA1 = norrubrofusarin + H2O + H(+). It participates in pigment biosynthesis. Functionally, dehydratase; part of the gene cluster that mediates the biosynthesis of aurofusarin, a red mycelium pigment which is acting as a mycotoxin. The first step is performed by the polyketide synthase which condenses one acetyl-CoA and 6 malonyl-CoA units to form the first intermediate, the cyclic heptaketide and yellow pigment YWA1. The C2 hydroxyl group in the pyrone ring of YWA1 is probably formed during ring closure by an aldol-type cyclization reaction. The dehydratase aurZ then acts as the first tailoring enzyme in the aurofusarin biosynthetic pathway by converting YWA1 to nor-rubrofusarin. Nor-rubrofusarin is then methylated to rubrofusarin by the O-methyltransferase aurJ. Rubrofusarin is then transported across the plasma membrane by the rubrofusarin-specific pump aurT for further enzymatic processing by the extracellular complex composed of GIP1, aurF, aurO and aurS to yield aurofusarin. This chain is Dehydratase aurZ, found in Gibberella zeae (strain ATCC MYA-4620 / CBS 123657 / FGSC 9075 / NRRL 31084 / PH-1) (Wheat head blight fungus).